We begin with the raw amino-acid sequence, 338 residues long: MAELKPFLAKVANREVLTRDEARQAFDILMSGEATPSQIGAFLMALRVRGETVDEIVGAVTAMRAKMLPVEAPADAIDIVGTGGDGFGTYNISTLAAFIVAGAGVPVAKHGNRAQSSKAGTADTQSVLGIKLDIGPEVIARCIREAGIGFMFAQLHHSSMRHVGPSRVELGTRTIFNLLGPLANPAGARRQLLGVFAPQWVVPLAEVLKDLNAESVWVVHGNGLDEITTTGTTSVAALEDGKIRTFELTPADFGLAHADLADLKGGDGIANAAALRAVLSGEKNAYRDISLANAAASLVIAGKAETLHDGMKLAAQSLDSGATAAALEKLIAVSNDEE.

5-phospho-alpha-D-ribose 1-diphosphate-binding positions include glycine 81, glycine 84 to aspartate 85, threonine 89, asparagine 91 to threonine 94, lysine 109 to serine 117, and threonine 121. Glycine 81 provides a ligand contact to anthranilate. Position 93 (serine 93) interacts with Mg(2+). Anthranilate is bound at residue asparagine 112. Residue arginine 167 participates in anthranilate binding. Residues aspartate 225 and glutamate 226 each contribute to the Mg(2+) site.

The protein belongs to the anthranilate phosphoribosyltransferase family. In terms of assembly, homodimer. Requires Mg(2+) as cofactor.

It catalyses the reaction N-(5-phospho-beta-D-ribosyl)anthranilate + diphosphate = 5-phospho-alpha-D-ribose 1-diphosphate + anthranilate. It functions in the pathway amino-acid biosynthesis; L-tryptophan biosynthesis; L-tryptophan from chorismate: step 2/5. Functionally, catalyzes the transfer of the phosphoribosyl group of 5-phosphorylribose-1-pyrophosphate (PRPP) to anthranilate to yield N-(5'-phosphoribosyl)-anthranilate (PRA). The sequence is that of Anthranilate phosphoribosyltransferase from Rhizobium rhizogenes (strain K84 / ATCC BAA-868) (Agrobacterium radiobacter).